A 151-amino-acid chain; its full sequence is Deoxyuridine 5'-triphosphate nucleotidohydrolase (151 aa).

Residues 70–72 (RSG), Asn-83, 87–89 (LID), and Met-97 contribute to the substrate site.

This sequence belongs to the dUTPase family. The cofactor is Mg(2+).

The enzyme catalyses dUTP + H2O = dUMP + diphosphate + H(+). The protein operates within pyrimidine metabolism; dUMP biosynthesis; dUMP from dCTP (dUTP route): step 2/2. In terms of biological role, this enzyme is involved in nucleotide metabolism: it produces dUMP, the immediate precursor of thymidine nucleotides and it decreases the intracellular concentration of dUTP so that uracil cannot be incorporated into DNA. The chain is Deoxyuridine 5'-triphosphate nucleotidohydrolase from Pseudomonas paraeruginosa (strain DSM 24068 / PA7) (Pseudomonas aeruginosa (strain PA7)).